A 452-amino-acid polypeptide reads, in one-letter code: Maltoporin (452 aa).

An N-terminal signal peptide occupies residues 1 to 25; it reads MMITLRKLPLAVAVAAGVMSAQAMA.

It belongs to the porin LamB (TC 1.B.3) family. Homotrimer formed of three 18-stranded antiparallel beta-barrels, containing three independent channels.

It is found in the cell outer membrane. The enzyme catalyses beta-maltose(in) = beta-maltose(out). Its function is as follows. Involved in the transport of maltose and maltodextrins. This Salmonella enteritidis PT4 (strain P125109) protein is Maltoporin.